Consider the following 260-residue polypeptide: MTGPAAAPVPDAPASLDVSGLAFAYPDGHQALFGVDFCVARGERVALLGPNGAGKTTLVLHLNGILTGGTGTVTVAGLPVDKRNMAEIRRRVGIVFQDPDDQLFMPTVREDVAFGPAAAGVKGAELEACVDRALTLVGMAEFKDRPPHHLSFGQRRRVAVATVLAMEPEILVLDEPSSNLDPASRRELADILRSLDVTVLMVTHDLPYALELCPRALILSDGAIAADGPTAALLSDDDLMRAHRLELPFGFDPRSVRASG.

An ABC transporter domain is found at 16-246; that stretch reads LDVSGLAFAY…DDLMRAHRLE (231 aa). 49–56 contributes to the ATP binding site; that stretch reads GPNGAGKT.

The protein belongs to the ABC transporter superfamily.

The protein localises to the cell membrane. In terms of biological role, probably part of an ABC transporter complex. Responsible for energy coupling to the transport system. The chain is Putative ABC transporter ATP-binding protein SCO3161 from Streptomyces coelicolor (strain ATCC BAA-471 / A3(2) / M145).